The chain runs to 865 residues: MRGILKKISQINFGLMSPEDIRKMSVAQIVTPDTYDEDGYPIENELMDPRLGVIGSSLRCRSCGAKGGECPGHFGSINLARPVIHVGFADTIHKILSSICRKCSRILLTETEIQDYRQRILEAMEREESLTPIIKEIYAEARRDRCPHCEEEQEEIKLDKPVSIVEGDYKLTPSEVRERLERITDNDSLLLGVNPEVARPEWMVLTVLPVPPVTVRPSITLETGERSEDDLTHKLVDILRINQRLKENMEAGAPQLIVEDLWELLQYHVTTYFDNEASGVPPARHRSGRPLKTLAQRLKGKEGRFRSNLSGKRVNFSARTVVSPDPNVSVNEVGVPELIAKEVTVPVYVTEWNIDRMKEHIENGPDVHPGANYVIRPDGRKIRAYNETKDVVLENLKPGYIVERHLKDGDIVLFNRQPSLHRMSMMAHEVRVLPYKTFRLNLCVCPPYNADFDGDEMNMHVFQTEESRAEAKTLMRVQDHILSPRFRDLSSGVYTTISQEHTSSQGKRLFSVRSRPPDPQEGRAPPPDREGREWTVKEIFSMVLPDDLNMVYLAEICRKCDECLEMDWENDAYVVIENGQLITGVIDEKAYGAFAGKILDQIVKEYGSDAAKEFLDSATKLAIAGIMHAGFTTSTNDEEIPEEAKERIEAHLRNAEARVDQLIEAYENGELEPLPGRSLEETLEMKIMQVLGEAKDKSGEIAESYFDMDENHAVIMALTGARGAMLNLTQITACVGQQSVHGGRITRGYDNRTLPHFKKGELGAKSRGFVHSSYKEDSILLEFMGGREGLVDTAIRTAQSGYMQRRLVNALQDLTVDENGRVVDNRGVIIQTRFGEDGVDPAKSDYGKIVDLDKLVQEIRLKSGK.

The Zn(2+) site is built by Cys-60, Cys-63, Cys-70, His-73, Cys-100, Cys-103, Cys-146, and Cys-149. The Mg(2+) site is built by Asp-451, Asp-453, and Asp-455. The tract at residues 500–531 (EHTSSQGKRLFSVRSRPPDPQEGRAPPPDREG) is disordered. Positions 515–531 (RPPDPQEGRAPPPDREG) are enriched in basic and acidic residues.

It belongs to the RNA polymerase beta' chain family. Part of the RNA polymerase complex. It depends on Mg(2+) as a cofactor. Requires Zn(2+) as cofactor.

The protein resides in the cytoplasm. It carries out the reaction RNA(n) + a ribonucleoside 5'-triphosphate = RNA(n+1) + diphosphate. Functionally, DNA-dependent RNA polymerase (RNAP) catalyzes the transcription of DNA into RNA using the four ribonucleoside triphosphates as substrates. Forms the clamp head domain. The polypeptide is DNA-directed RNA polymerase subunit Rpo1N (Methanothermobacter thermautotrophicus (strain Winter) (Methanobacterium thermoautotrophicum)).